The sequence spans 178 residues: Large ribosomal subunit protein uL5 (178 aa).

It belongs to the universal ribosomal protein uL5 family. In terms of assembly, part of the 50S ribosomal subunit; part of the 5S rRNA/L5/L18/L25 subcomplex. Contacts the 5S rRNA and the P site tRNA. Forms a bridge to the 30S subunit in the 70S ribosome.

This is one of the proteins that bind and probably mediate the attachment of the 5S RNA into the large ribosomal subunit, where it forms part of the central protuberance. In the 70S ribosome it contacts protein S13 of the 30S subunit (bridge B1b), connecting the 2 subunits; this bridge is implicated in subunit movement. Contacts the P site tRNA; the 5S rRNA and some of its associated proteins might help stabilize positioning of ribosome-bound tRNAs. The chain is Large ribosomal subunit protein uL5 from Wigglesworthia glossinidia brevipalpis.